Consider the following 608-residue polypeptide: Albumin (608 aa).

An N-terminal signal peptide occupies residues 1 to 18 (MKWVTFISLFFLFSSAYS). The propeptide occupies 19 to 24 (RGLVRR). Albumin domains are found at residues 19–210 (RGLV…EALR), 211–403 (EKVL…EFKP), and 404–601 (LVDE…KLVA). A Phosphoserine modification is found at Ser29. Positions 30 and 37 each coordinate Ca(2+). Cys77 and Cys86 are joined by a disulfide. 2 positions are modified to phosphoserine: Ser82 and Ser89. Residue His91 participates in Zn(2+) binding. 6 disulfide bridges follow: Cys99/Cys115, Cys114/Cys125, Cys148/Cys193, Cys192/Cys201, Cys224/Cys270, and Cys269/Cys277. Lys229 bears the N6-succinyllysine mark. Residue Glu268 coordinates Ca(2+). Zn(2+) contacts are provided by His271 and Asp273. Ca(2+) is bound by residues Asp273, Glu276, Asp279, and Asp283. Intrachain disulfides connect Cys289/Cys303, Cys302/Cys313, Cys340/Cys385, Cys384/Cys393, Cys416/Cys462, Cys461/Cys472, Cys485/Cys501, and Cys500/Cys511. Position 443 is a phosphoserine (Ser443). Thr444 and Thr446 each carry phosphothreonine. N6-succinyllysine is present on Lys460. Ser513 bears the Phosphoserine mark. 2 disulfides stabilise this stretch: Cys538/Cys583 and Cys582/Cys591. Lys558 is modified (N6-methyllysine). Thr570 is subject to Phosphothreonine. Lys588 carries the N6-succinyllysine modification.

The protein belongs to the ALB/AFP/VDB family. In terms of assembly, interacts with FCGRT; this interaction regulates ALB homeostasis. Interacts with TASOR. In plasma, occurs in a covalently-linked complex with chromophore-bound alpha-1-microglobulin; this interaction does not prevent fatty acid binding to ALB. In terms of processing, phosphorylated by FAM20C in the extracellular medium. In terms of tissue distribution, plasma.

It is found in the secreted. Binds water, Ca(2+), Na(+), K(+), fatty acids, hormones, bilirubin and drugs. Its main function is the regulation of the colloidal osmotic pressure of blood. Major zinc transporter in plasma, typically binds about 80% of all plasma zinc. Major calcium and magnesium transporter in plasma, binds approximately 45% of circulating calcium and magnesium in plasma. Potentially has more than two calcium-binding sites and might additionally bind calcium in a non-specific manner. The shared binding site between zinc and calcium at residue Asp-273 suggests a crosstalk between zinc and calcium transport in the blood. The rank order of affinity is zinc &gt; calcium &gt; magnesium. Binds to the bacterial siderophore enterobactin and inhibits enterobactin-mediated iron uptake of E.coli from ferric transferrin, and may thereby limit the utilization of iron and growth of enteric bacteria such as E.coli. Does not prevent iron uptake by the bacterial siderophore aerobactin. This is Albumin (ALB) from Canis lupus familiaris (Dog).